The primary structure comprises 138 residues: Methane monooxygenase regulatory protein B (138 aa).

Belongs to the TmoD/XamoD family. The soluble methane monooxygenase (sMMO) consists of four components A/MMOH (composed of alpha/MmoX, beta/MmoY and gamma/MmoZ), B/MMOB (MmoB), C/MMOR (MmoC) and D/MMOD (MmoD).

Functionally, the B protein acts as a regulator of electron flow through the soluble mmo complex, switching the enzyme from an oxidase to a hydroxylase in the presence of the substrate. This chain is Methane monooxygenase regulatory protein B (mmoB), found in Methylosinus trichosporium.